Reading from the N-terminus, the 136-residue chain is Large ribosomal subunit protein bL21 (136 aa).

Belongs to the bacterial ribosomal protein bL21 family. As to quaternary structure, part of the 50S ribosomal subunit. Contacts protein L20.

Its function is as follows. This protein binds to 23S rRNA in the presence of protein L20. The polypeptide is Large ribosomal subunit protein bL21 (Trichodesmium erythraeum (strain IMS101)).